The sequence spans 163 residues: Large ribosomal subunit protein uL11 (163 aa).

A disordered region spans residues 1-25 (MAGTIEVLVAGGQADPGPPLGPELG).

The protein belongs to the universal ribosomal protein uL11 family. Part of the ribosomal stalk of the 50S ribosomal subunit. Interacts with L10 and the large rRNA to form the base of the stalk. L10 forms an elongated spine to which L12 dimers bind in a sequential fashion forming a multimeric L10(L12)X complex.

Forms part of the ribosomal stalk which helps the ribosome interact with GTP-bound translation factors. The sequence is that of Large ribosomal subunit protein uL11 from Natronomonas pharaonis (strain ATCC 35678 / DSM 2160 / CIP 103997 / JCM 8858 / NBRC 14720 / NCIMB 2260 / Gabara) (Halobacterium pharaonis).